Reading from the N-terminus, the 850-residue chain is Pro-neuregulin-2, membrane-bound isoform (850 aa).

The disordered stretch occupies residues 1–96; that stretch reads MRQVCCSALP…AAAAGGMRRD (96 aa). A propeptide spanning residues 1 to 111 is cleaved from the precursor; the sequence is MRQVCCSALP…SMLLFGVSLA (111 aa). The span at 20–59 shows a compositional bias: low complexity; that stretch reads SSYSDSSSSSSERSSSSSSSSSESGSSSRSSSNNSSISRP. Residues asparagine 52 and asparagine 53 are each glycosylated (N-linked (GlcNAc...) asparagine). Positions 60–74 are enriched in pro residues; the sequence is AAPPEPRPQQQPQPR. Positions 75-92 are enriched in low complexity; the sequence is SPAARRAAARSRAAAAGG. At 112-405 the chain is on the extracellular side; it reads CYSPSLKSVQ…QKAEELYQKR (294 aa). Residues asparagine 147, asparagine 278, and asparagine 346 are each glycosylated (N-linked (GlcNAc...) asparagine). An Ig-like C2-type domain is found at 237-332; that stretch reads PKLKKMKSQT…RGRLYVNSVS (96 aa). Cystine bridges form between cysteine 257/cysteine 311, cysteine 345/cysteine 359, cysteine 353/cysteine 370, and cysteine 372/cysteine 381. An EGF-like domain is found at 341 to 382; that stretch reads HARKCNETAKSYCVNGGVCYYIEGINQLSCKCPNGFFGQRCL. A helical transmembrane segment spans residues 406 to 426; that stretch reads VLTITGICVALLVVGIVCVVA. Over 427–850 the chain is Cytoplasmic; the sequence is YCKTKKQRKQ…PRAKQDSAPL (424 aa). Disordered regions lie at residues 492 to 535, 566 to 585, 647 to 681, 700 to 788, and 801 to 850; these read TFSG…DSQS, EERR…SLRD, LLRH…YYPA, LPAS…DGAL, and AHDA…SAPL. Residues 494 to 506 show a composition bias toward low complexity; sequence SGSHSCSPSHHCS. Over residues 514-527 the composition is skewed to basic and acidic residues; sequence HRHESHTWSLERSE. Residues 651-665 show a composition bias toward pro residues; the sequence is PAPPGPGPGPGPGPG. Residues 750 to 767 show a composition bias toward low complexity; sequence GLAAQRARAARDSLSLSS.

It belongs to the neuregulin family. Interacts with ERBB3 and ERBB4. Proteolytic cleavage close to the plasma membrane on the external face leads to the release of the soluble growth factor form. Post-translationally, extensive glycosylation precedes the proteolytic cleavage. In terms of tissue distribution, restricted to the cerebellum in the adult.

It localises to the cell membrane. The protein localises to the secreted. Functionally, direct ligand for ERBB3 and ERBB4 tyrosine kinase receptors. Concomitantly recruits ERBB1 and ERBB2 coreceptors, resulting in ligand-stimulated tyrosine phosphorylation and activation of the ERBB receptors. May also promote the heterodimerization with the EGF receptor. The chain is Pro-neuregulin-2, membrane-bound isoform (NRG2) from Homo sapiens (Human).